The following is a 100-amino-acid chain: Putative membrane protein insertion efficiency factor (100 aa).

Residues 73–100 are disordered; sequence DPVPDLPGSAPEENGRPSPDGQHSGSGG.

It belongs to the UPF0161 family.

It is found in the cell inner membrane. Its function is as follows. Could be involved in insertion of integral membrane proteins into the membrane. This chain is Putative membrane protein insertion efficiency factor, found in Synechococcus sp. (strain JA-3-3Ab) (Cyanobacteria bacterium Yellowstone A-Prime).